The chain runs to 261 residues: Cytochrome c oxidase subunit 3 (261 aa).

Topologically, residues 1–15 (MTHQTHAYHMVNPSP) are mitochondrial matrix. A helical transmembrane segment spans residues 16–34 (WPLTGALSALLMTSGLIMW). Topologically, residues 35-40 (FHFNST) are mitochondrial intermembrane. Residues 41 to 66 (TLLTLGLTTNMLTMYQWWRDVIREST) form a helical membrane-spanning segment. At 67 to 72 (FQGHHT) the chain is on the mitochondrial matrix side. The chain crosses the membrane as a helical span at residues 73–105 (PTVQKGLRYGMILFIISEVLFFTGFFWAFYHSS). The Mitochondrial intermembrane portion of the chain corresponds to 106–128 (LAPTPELGGCWPPTGIHPLNPLE). A helical transmembrane segment spans residues 129-152 (VPLLNTSVLLASGVSITWAHHSLM). Topologically, residues 153-155 (EGN) are mitochondrial matrix. Residues 156 to 183 (RNPMLQALFITIALGIYFTLLQASEYYE) form a helical membrane-spanning segment. The Mitochondrial intermembrane portion of the chain corresponds to 184 to 190 (APFTISD). Residues 191 to 223 (GVYGSTFFVATGFHGLHVIIGSTFLIVCFFRQL) form a helical membrane-spanning segment. The Mitochondrial matrix segment spans residues 224–232 (KFHFTSNHH). The helical transmembrane segment at 233-256 (FGFEAAAWYWHFVDVVWLFLYVSI) threads the bilayer. The Mitochondrial intermembrane portion of the chain corresponds to 257 to 261 (YWWGS).

The protein belongs to the cytochrome c oxidase subunit 3 family. Component of the cytochrome c oxidase (complex IV, CIV), a multisubunit enzyme composed of 14 subunits. The complex is composed of a catalytic core of 3 subunits MT-CO1, MT-CO2 and MT-CO3, encoded in the mitochondrial DNA, and 11 supernumerary subunits COX4I, COX5A, COX5B, COX6A, COX6B, COX6C, COX7A, COX7B, COX7C, COX8 and NDUFA4, which are encoded in the nuclear genome. The complex exists as a monomer or a dimer and forms supercomplexes (SCs) in the inner mitochondrial membrane with NADH-ubiquinone oxidoreductase (complex I, CI) and ubiquinol-cytochrome c oxidoreductase (cytochrome b-c1 complex, complex III, CIII), resulting in different assemblies (supercomplex SCI(1)III(2)IV(1) and megacomplex MCI(2)III(2)IV(2)).

It is found in the mitochondrion inner membrane. The catalysed reaction is 4 Fe(II)-[cytochrome c] + O2 + 8 H(+)(in) = 4 Fe(III)-[cytochrome c] + 2 H2O + 4 H(+)(out). In terms of biological role, component of the cytochrome c oxidase, the last enzyme in the mitochondrial electron transport chain which drives oxidative phosphorylation. The respiratory chain contains 3 multisubunit complexes succinate dehydrogenase (complex II, CII), ubiquinol-cytochrome c oxidoreductase (cytochrome b-c1 complex, complex III, CIII) and cytochrome c oxidase (complex IV, CIV), that cooperate to transfer electrons derived from NADH and succinate to molecular oxygen, creating an electrochemical gradient over the inner membrane that drives transmembrane transport and the ATP synthase. Cytochrome c oxidase is the component of the respiratory chain that catalyzes the reduction of oxygen to water. Electrons originating from reduced cytochrome c in the intermembrane space (IMS) are transferred via the dinuclear copper A center (CU(A)) of subunit 2 and heme A of subunit 1 to the active site in subunit 1, a binuclear center (BNC) formed by heme A3 and copper B (CU(B)). The BNC reduces molecular oxygen to 2 water molecules using 4 electrons from cytochrome c in the IMS and 4 protons from the mitochondrial matrix. This chain is Cytochrome c oxidase subunit 3 (MT-CO3), found in Madoqua guentheri (Guenther's dik-dik).